The primary structure comprises 99 residues: Large ribosomal subunit protein bL28 (99 aa).

The disordered stretch occupies residues 1–25 (MSRKCAVTGKGVQTGNNVSHANNKS). The segment covering 11–22 (GVQTGNNVSHAN) has biased composition (polar residues).

The protein belongs to the bacterial ribosomal protein bL28 family.

This Rhodospirillum centenum (strain ATCC 51521 / SW) protein is Large ribosomal subunit protein bL28.